The sequence spans 113 residues: U11-theraphotoxin-Hhn1a (113 aa).

An N-terminal signal peptide occupies residues Met-1–Ala-21. The propeptide occupies Asp-22–Arg-74. The segment covering Leu-59–Asn-69 has biased composition (basic and acidic residues). A disordered region spans residues Leu-59–Asp-83. 3 cysteine pairs are disulfide-bonded: Cys-75-Cys-90, Cys-82-Cys-95, and Cys-89-Cys-110.

This sequence belongs to the neurotoxin 14 (magi-1) family. 01 (HNTX-16) subfamily. As to expression, expressed by the venom gland.

It is found in the secreted. Probable ion channel inhibitor. The sequence is that of U11-theraphotoxin-Hhn1a from Cyriopagopus hainanus (Chinese bird spider).